The chain runs to 589 residues: Carbonic anhydrase (589 aa).

2 consecutive Alpha-carbonic anhydrase domains span residues 59–316 and 321–585; these read HDYN…YEYK and DKYN…YGYN. A substrate-binding site is contributed by 258–259; sequence TT. The catalytic stretch occupies residues 390 to 589; sequence MQINFGDPPA…TVYGYNGAAA (200 aa). Residues H420, H422, and H440 each coordinate Zn(2+).

It belongs to the alpha-carbonic anhydrase family. It depends on Zn(2+) as a cofactor.

It carries out the reaction hydrogencarbonate + H(+) = CO2 + H2O. Functionally, reversible hydration of carbon dioxide. This chain is Carbonic anhydrase (DCA), found in Dunaliella salina (Green alga).